We begin with the raw amino-acid sequence, 146 residues long: Hemoglobin subunit beta (146 aa).

The 145-residue stretch at 2–146 (HWSAEEKQLI…VAHALARKYH (145 aa)) folds into the Globin domain. Residues H63 and H92 each contribute to the heme b site.

Belongs to the globin family. As to quaternary structure, heterotetramer of two alpha chains and two beta chains. In terms of tissue distribution, red blood cells.

In terms of biological role, involved in oxygen transport from the lung to the various peripheral tissues. The sequence is that of Hemoglobin subunit beta (HBB) from Aptenodytes forsteri (Emperor penguin).